The sequence spans 333 residues: MIETPYLLFLGDAPDMLAAKVAIGIRDWRPDHAVGQISLPGCGANLGLTEMTLEEAKAAGAKTLVIGVANRGGKISQEWKKVLVQALEEGFDLASGLHNLLRDEPDLAAVAEATGRTLHDVRVPSVQYPIADGVKRRGKRCLAVGTDCSVGKMYTALAMDAEMQARGIKSTFRATGQTGILITGDGVPLDAVIADFMAGSIEYLTPDNDDDHWDLIEGQGSLFHVSYSGVTMALVHGGQPDALILCHEPTRTHMRGLPDYDVPSLEELRDVALPLAQRANKDCKIVGISVNTQHLGEEEAVAYLKEVEGRMGLPAVDPYRHGAGRLVDALAAV.

The protein belongs to the N-acetyltransferase DgcN family.

It catalyses the reaction D-glutamate + acetyl-CoA = N-acetyl-D-glutamate + CoA + H(+). It functions in the pathway amino-acid degradation. Its function is as follows. N-acetyltransferase involved in a deamination-independent D-glutamate degradation pathway, named the DgcN-DgcA pathway. Catalyzes the transfer of the acetyl moiety from acetyl-CoA to D-glutamate to generate N-acetyl-D-glutamate. The polypeptide is D-glutamate N-acetyltransferase (Tritonibacter scottomollicae (Epibacterium scottomollicae)).